Consider the following 307-residue polypeptide: uncharacterized protein (307 aa).

This is an uncharacterized protein from Acanthamoeba polyphaga mimivirus (APMV).